The chain runs to 243 residues: ATP synthase subunit a (243 aa).

7 consecutive transmembrane segments (helical) span residues 29–49 (NASLFMVLSTISVALFCYIGL), 54–74 (IIPNGIQSIVEFIYEFIVSTI), 89–109 (VFTIFMFIATCNLLGILPLGF), 114–134 (HIAVTFAISMVVFVSVTIIGF), 144–164 (ILLPQGTPGWLAPMMVFIELF), 182–202 (IAGHTIIKVIAGFVVKMNIFL), and 208–228 (IFIIILIGFEIFVAILQAYIF).

Belongs to the ATPase A chain family. F-type ATPases have 2 components, CF(1) - the catalytic core - and CF(0) - the membrane proton channel. CF(1) has five subunits: alpha(3), beta(3), gamma(1), delta(1), epsilon(1). CF(0) has three main subunits: a(1), b(2) and c(9-12). The alpha and beta chains form an alternating ring which encloses part of the gamma chain. CF(1) is attached to CF(0) by a central stalk formed by the gamma and epsilon chains, while a peripheral stalk is formed by the delta and b chains.

It localises to the cell inner membrane. Key component of the proton channel; it plays a direct role in the translocation of protons across the membrane. This is ATP synthase subunit a from Ehrlichia canis (strain Jake).